The chain runs to 137 residues: Large ribosomal subunit protein uL16 (137 aa).

Belongs to the universal ribosomal protein uL16 family. As to quaternary structure, part of the 50S ribosomal subunit.

In terms of biological role, binds 23S rRNA and is also seen to make contacts with the A and possibly P site tRNAs. In Wolbachia pipientis subsp. Culex pipiens (strain wPip), this protein is Large ribosomal subunit protein uL16.